Here is a 151-residue protein sequence, read N- to C-terminus: Protein NrdI (151 aa).

Belongs to the NrdI family.

In terms of biological role, probably involved in ribonucleotide reductase function. This chain is Protein NrdI, found in Mycoplasmopsis pulmonis (strain UAB CTIP) (Mycoplasma pulmonis).